The following is a 225-amino-acid chain: Uracil-DNA glycosylase 1 (225 aa).

D68 acts as the Proton acceptor in catalysis.

It belongs to the uracil-DNA glycosylase (UDG) superfamily. UNG family.

Its subcellular location is the cytoplasm. It carries out the reaction Hydrolyzes single-stranded DNA or mismatched double-stranded DNA and polynucleotides, releasing free uracil.. Functionally, excises uracil residues from the DNA which can arise as a result of misincorporation of dUMP residues by DNA polymerase or due to deamination of cytosine. This Streptomyces avermitilis (strain ATCC 31267 / DSM 46492 / JCM 5070 / NBRC 14893 / NCIMB 12804 / NRRL 8165 / MA-4680) protein is Uracil-DNA glycosylase 1 (ung1).